The sequence spans 233 residues: Large ribosomal subunit protein uL1 (233 aa).

The protein belongs to the universal ribosomal protein uL1 family. As to quaternary structure, part of the 50S ribosomal subunit.

In terms of biological role, binds directly to 23S rRNA. The L1 stalk is quite mobile in the ribosome, and is involved in E site tRNA release. Functionally, protein L1 is also a translational repressor protein, it controls the translation of the L11 operon by binding to its mRNA. This is Large ribosomal subunit protein uL1 from Novosphingobium aromaticivorans (strain ATCC 700278 / DSM 12444 / CCUG 56034 / CIP 105152 / NBRC 16084 / F199).